The sequence spans 423 residues: COUP transcription factor 1 (423 aa).

A disordered region spans residues 1 to 81; sequence MAMVVSSWRD…QGPPGSGQSQ (81 aa). Over residues 39–67 the composition is skewed to low complexity; it reads EQQQQAGSGAPHTPQTPGQPGAPATPGTA. A DNA-binding region (nuclear receptor) is located at residues 83 to 158; that stretch reads HIECVVCGDK…VGMRREAVQR (76 aa). NR C4-type zinc fingers lie at residues 86–106 and 122–146; these read CVVCGDKSSGKHYGQFTCEGC and CRANRNCPIDQHHRNQCQYCRLKKC. The NR LBD domain occupies 184 to 410; sequence YLSGYISLLL…TLIRDMLLSG (227 aa).

This sequence belongs to the nuclear hormone receptor family. NR2 subfamily. Binds DNA as dimer; homodimer and probable heterodimer with NR2F6. Interacts with GTF2B; this interaction is direct. Interacts with COPS2.

The protein resides in the nucleus. Coup (chicken ovalbumin upstream promoter) transcription factor binds to the ovalbumin promoter and, in conjunction with another protein (S300-II) stimulates initiation of transcription. Binds to both direct repeats and palindromes of the 5'-AGGTCA-3' motif. Represses transcriptional activity of LHCG. The sequence is that of COUP transcription factor 1 (NR2F1) from Homo sapiens (Human).